A 701-amino-acid chain; its full sequence is Long chain acyl-CoA synthetase 6, peroxisomal (701 aa).

Residues 1–38 (MDSSSSSSSAAARRRINAIHSHLVTSSRSSPLLRSNPT) constitute a propeptide, removed in mature form. The short motif at 15–23 (RINAIHSHL) is the Microbody targeting signal element. 266-277 (ICYTSGTTGTPK) contacts ATP. The fatty acid-binding stretch occupies residues 526–550 (DGWLHTGDIGLWLPGGRLKIIDRKK).

It belongs to the ATP-dependent AMP-binding enzyme family. Mg(2+) serves as cofactor. As to expression, expressed in roots, stems, leaves flowers and germinating seedling. Preferentially expressed in seeds and senescent leaves.

It localises to the peroxisome. The protein resides in the glyoxysome membrane. The catalysed reaction is a long-chain fatty acid + ATP + CoA = a long-chain fatty acyl-CoA + AMP + diphosphate. It catalyses the reaction tetradecanoate + ATP + CoA = tetradecanoyl-CoA + AMP + diphosphate. It carries out the reaction hexadecanoate + ATP + CoA = hexadecanoyl-CoA + AMP + diphosphate. The enzyme catalyses (9Z)-octadecenoate + ATP + CoA = (9Z)-octadecenoyl-CoA + AMP + diphosphate. The catalysed reaction is (9Z,12Z)-octadecadienoate + ATP + CoA = (9Z,12Z)-octadecadienoyl-CoA + AMP + diphosphate. It catalyses the reaction (9Z,12Z,15Z)-octadecatrienoate + ATP + CoA = (9Z,12Z,15Z)-octadecatrienoyl-CoA + AMP + diphosphate. It participates in lipid metabolism; fatty acid metabolism. Activation of long-chain fatty acids for both synthesis of cellular lipids, and degradation via beta-oxidation. Preferentially uses palmitate, palmitoleate, oleate, linoleate and eicosenoate as substrates. Can use myristate and linolenate as substrates. May play a regulatory role both in fatty acid import into glyoxysomes and in fatty acid beta-oxidation. Functions redundantly with LACS7 in lipid mobilization for beta-oxidation during seed germination, which is essential for postgerminative growth and seedling establishment. In Arabidopsis thaliana (Mouse-ear cress), this protein is Long chain acyl-CoA synthetase 6, peroxisomal.